Reading from the N-terminus, the 186-residue chain is MGKTSQRKQCDCENPSKPCLSTSIPLRMSSYTFKRPVTKITSHLGNEVRYYQWEETLEKPEQACWQKRLQGLQAYSSAGELLSTSDLAKTLKDLTSTDTVASASDTQATSIDITSVPTLESSSHLANMIPEAGPQILCKEFLVTEQDIINQERKVKIARERLAVALIAHKLASEMETVRGSRKANL.

The interval 1 to 104 (MGKTSQRKQC…TSTDTVASAS (104 aa)) is transcription repressor.

This sequence belongs to the MBD3L family. As to expression, highly expressed in testis. Not detected in the other tissues tested.

The protein localises to the nucleus. Functionally, transcriptional repressor. This chain is Methyl-CpG-binding domain protein 3-like 1 (Mbd3l1), found in Mus musculus (Mouse).